The sequence spans 395 residues: Bifunctional enzyme IspD/IspF (395 aa).

Residues 1–237 (MRTWVLLLAA…DANEPQVTVP (237 aa)) form a 2-C-methyl-D-erythritol 4-phosphate cytidylyltransferase region. Residues 238–395 (CVGWGYDVHR…AAVTGLRPMP (158 aa)) are 2-C-methyl-D-erythritol 2,4-cyclodiphosphate synthase. 2 residues coordinate a divalent metal cation: Asp-244 and His-246. 4-CDP-2-C-methyl-D-erythritol 2-phosphate contacts are provided by residues 244–246 (DVH) and 270–271 (HS). His-278 contacts a divalent metal cation. Residues 292-294 (DIG), 297-301 (FPDSD), 368-371 (TTEE), and Phe-375 contribute to the 4-CDP-2-C-methyl-D-erythritol 2-phosphate site.

In the N-terminal section; belongs to the IspD/TarI cytidylyltransferase family. IspD subfamily. The protein in the C-terminal section; belongs to the IspF family. The cofactor is a divalent metal cation.

It carries out the reaction 2-C-methyl-D-erythritol 4-phosphate + CTP + H(+) = 4-CDP-2-C-methyl-D-erythritol + diphosphate. It catalyses the reaction 4-CDP-2-C-methyl-D-erythritol 2-phosphate = 2-C-methyl-D-erythritol 2,4-cyclic diphosphate + CMP. It participates in isoprenoid biosynthesis; isopentenyl diphosphate biosynthesis via DXP pathway; isopentenyl diphosphate from 1-deoxy-D-xylulose 5-phosphate: step 2/6. It functions in the pathway isoprenoid biosynthesis; isopentenyl diphosphate biosynthesis via DXP pathway; isopentenyl diphosphate from 1-deoxy-D-xylulose 5-phosphate: step 4/6. Bifunctional enzyme that catalyzes the formation of 4-diphosphocytidyl-2-C-methyl-D-erythritol from CTP and 2-C-methyl-D-erythritol 4-phosphate (MEP) (IspD), and catalyzes the conversion of 4-diphosphocytidyl-2-C-methyl-D-erythritol 2-phosphate (CDP-ME2P) to 2-C-methyl-D-erythritol 2,4-cyclodiphosphate (ME-CPP) with a corresponding release of cytidine 5-monophosphate (CMP) (IspF). In Nitratidesulfovibrio vulgaris (strain ATCC 29579 / DSM 644 / CCUG 34227 / NCIMB 8303 / VKM B-1760 / Hildenborough) (Desulfovibrio vulgaris), this protein is Bifunctional enzyme IspD/IspF.